Consider the following 439-residue polypeptide: Testican-1 (439 aa).

Positions 1-21 are cleaved as a signal peptide; it reads MPAIAVLAAAAAAWCFLQVES. 5 disulfide bridges follow: cysteine 86–cysteine 97, cysteine 91–cysteine 107, cysteine 136–cysteine 166, cysteine 139–cysteine 159, and cysteine 148–cysteine 180. A Kazal-like domain is found at 130–182; it reads PSNLVKCKPCPVAQSAMVCGSDGHSYTSKCKLEFHACSTGKSLATLCDGPCPC. A glycan (O-linked (GalNAc...) threonine) is linked at threonine 228. A Thyroglobulin type-1 domain is found at 310–376; that stretch reads GLPCQNEMNR…GSRKQGAVSC (67 aa). 3 cysteine pairs are disulfide-bonded: cysteine 313–cysteine 337, cysteine 348–cysteine 355, and cysteine 357–cysteine 376. O-linked (Xyl...) (glycosaminoglycan) serine glycosylation is found at serine 383 and serine 388. The tract at residues 415 to 439 is disordered; it reads VHTRAVTEDDEDEDDDKEDEVGYIW. The span at 422–439 shows a compositional bias: acidic residues; that stretch reads EDDEDEDDDKEDEVGYIW.

Post-translationally, O-glycosylated. Glycosaminoglycan that contains chondroitin sulfate and heparan sulfate.

The protein localises to the secreted. The protein resides in the extracellular space. Its subcellular location is the extracellular matrix. Its function is as follows. May play a role in cell-cell and cell-matrix interactions. May contribute to various neuronal mechanisms in the central nervous system. This is Testican-1 (SPOCK1) from Homo sapiens (Human).